The primary structure comprises 350 residues: S-adenosylmethionine:tRNA ribosyltransferase-isomerase (350 aa).

The protein belongs to the QueA family. Monomer.

Its subcellular location is the cytoplasm. It carries out the reaction 7-aminomethyl-7-carbaguanosine(34) in tRNA + S-adenosyl-L-methionine = epoxyqueuosine(34) in tRNA + adenine + L-methionine + 2 H(+). Its pathway is tRNA modification; tRNA-queuosine biosynthesis. Its function is as follows. Transfers and isomerizes the ribose moiety from AdoMet to the 7-aminomethyl group of 7-deazaguanine (preQ1-tRNA) to give epoxyqueuosine (oQ-tRNA). This is S-adenosylmethionine:tRNA ribosyltransferase-isomerase from Vibrio vulnificus (strain CMCP6).